The sequence spans 348 residues: Phenylalanine--tRNA ligase alpha subunit (348 aa).

Glu-259 contacts Mg(2+).

It belongs to the class-II aminoacyl-tRNA synthetase family. Phe-tRNA synthetase alpha subunit type 1 subfamily. As to quaternary structure, tetramer of two alpha and two beta subunits. Mg(2+) is required as a cofactor.

It localises to the cytoplasm. It carries out the reaction tRNA(Phe) + L-phenylalanine + ATP = L-phenylalanyl-tRNA(Phe) + AMP + diphosphate + H(+). The sequence is that of Phenylalanine--tRNA ligase alpha subunit from Ligilactobacillus salivarius (strain UCC118) (Lactobacillus salivarius).